A 160-amino-acid chain; its full sequence is Large ribosomal subunit protein uL22c (160 aa).

It belongs to the universal ribosomal protein uL22 family. In terms of assembly, part of the 50S ribosomal subunit.

It is found in the plastid. Its subcellular location is the chloroplast. Functionally, this protein binds specifically to 23S rRNA. Its function is as follows. The globular domain of the protein is located near the polypeptide exit tunnel on the outside of the subunit, while an extended beta-hairpin is found that lines the wall of the exit tunnel in the center of the 70S ribosome. The chain is Large ribosomal subunit protein uL22c (rpl22) from Lepidium virginicum (Virginia pepperweed).